An 876-amino-acid chain; its full sequence is Aspartate--tRNA(Asp/Asn) ligase (876 aa).

The segment at 1-278 (MAATDTPWRP…FGFKRAYEGF (278 aa)) is unknown. The segment at 279 to 876 (MHVYRSHTCG…PKPKKEVKEG (598 aa)) is aspartyl-tRNA synthetase. Glutamate 453 lines the L-aspartate pocket. An aspartate region spans residues 477–480 (QQFK). L-aspartate is bound by residues arginine 499 and histidine 729. Position 499 to 501 (499 to 501 (RDE)) interacts with ATP. Glutamate 763 is a binding site for ATP. Arginine 770 provides a ligand contact to L-aspartate. 815–818 (GVDR) serves as a coordination point for ATP.

The protein belongs to the class-II aminoacyl-tRNA synthetase family. Type 1 subfamily. In terms of assembly, homodimer.

It localises to the cytoplasm. The catalysed reaction is tRNA(Asx) + L-aspartate + ATP = L-aspartyl-tRNA(Asx) + AMP + diphosphate. Its function is as follows. Aspartyl-tRNA synthetase with relaxed tRNA specificity since it is able to aspartylate not only its cognate tRNA(Asp) but also tRNA(Asn). Reaction proceeds in two steps: L-aspartate is first activated by ATP to form Asp-AMP and then transferred to the acceptor end of tRNA(Asp/Asn). The sequence is that of Aspartate--tRNA(Asp/Asn) ligase (aspS) from Paramagnetospirillum magneticum (strain ATCC 700264 / AMB-1) (Magnetospirillum magneticum).